Reading from the N-terminus, the 878-residue chain is Aminopeptidase M1-C (878 aa).

Residues L102–V209 form a required for membrane association region. Substrate is bound by residues E142 and G275 to N279. H311 is a Zn(2+) binding site. The Proton acceptor role is filled by E312. Zn(2+) contacts are provided by H315 and E334. A Dileucine internalization motif motif is present at residues L726–L727.

This sequence belongs to the peptidase M1 family. Homodimer. It depends on Zn(2+) as a cofactor.

It localises to the membrane. The protein resides in the microsome membrane. The protein localises to the cytoplasm. It catalyses the reaction Release of an N-terminal amino acid, Xaa-|-Yaa- from a peptide, amide or arylamide. Xaa is preferably Ala, but may be most amino acids including Pro (slow action). When a terminal hydrophobic residue is followed by a prolyl residue, the two may be released as an intact Xaa-Pro dipeptide.. The sequence is that of Aminopeptidase M1-C from Oryza sativa subsp. japonica (Rice).